The primary structure comprises 136 residues: Transcription antitermination protein NusB (136 aa).

It belongs to the NusB family.

Functionally, involved in transcription antitermination. Required for transcription of ribosomal RNA (rRNA) genes. Binds specifically to the boxA antiterminator sequence of the ribosomal RNA (rrn) operons. This chain is Transcription antitermination protein NusB, found in Paenarthrobacter aurescens (strain TC1).